A 338-amino-acid polypeptide reads, in one-letter code: Decarboxylase macB (338 aa).

Residues His7, His9, His159, and Asp283 each coordinate Zn(2+).

This sequence belongs to the metallo-dependent hydrolases superfamily. ACMSD family.

It catalyses the reaction 6-methylsalicylate + H(+) = 3-methylphenol + CO2. The protein operates within secondary metabolite biosynthesis; terpenoid biosynthesis. Its function is as follows. Decarboxylase; part of the gene cluster that mediates the biosynthesis of macrophorins, isoprenoid epoxycyclohexenones containing cyclized drimane moieties. The first step of the pathway is the synthesis of 6-methylsalicylic acid (6-MSA) by the polyketide synthase macA. 6-MSA is then converted to m-cresol by the decarboxylase macB. The cytochrome P450 monooxygenase macC then catalyzes the oxidation of m-cresol to toluquinol. Epoxidation of toluquinol is then performed by the short chain dehydrogenase macD, with the help of macE, and a further prenylation by macG leads to 7-deacetoxyyanuthone A. The next step is the hydroxylation of C-22 of 7-deacetoxyyanuthone A by the cytochrome P450 monooxygenase macH to yield 22-deacetylyanuthone A. O-Mevalon transferase macI then attaches mevalon to the hydroxyl group of 22-deacetylyanuthone A to produce yanuthone E. The terpene cyclase macJ catalyzes the cyclization of 22-deacetylyanuthone A to macrophorin A. MacJ is also able to catalyze cyclization of yanuthone E and 7-deacetoxyyanuthone A to their corresponding macrophorins. The macJ products can be further modified by macH and macJ, as well as by the FAD-dependent monooxygenase macF, to produce additional macrophorins, including 4'-oxomacrophorin A, 4'-oxomacrophorin D and 4'-oxomacrophorin E. The sequence is that of Decarboxylase macB from Penicillium terrestre.